Reading from the N-terminus, the 782-residue chain is E3 UFM1-protein ligase 1 homolog (782 aa).

The tract at residues 404–477 (NASTQELEDD…GSRGGGGVNK (74 aa)) is disordered. Over residues 443 to 453 (KSTKKHQRGKA) the composition is skewed to basic residues.

Belongs to the UFL1 family.

E3 UFM1-protein ligase that mediates ufmylation of target proteins. The chain is E3 UFM1-protein ligase 1 homolog from Drosophila erecta (Fruit fly).